We begin with the raw amino-acid sequence, 179 residues long: Peptidyl-tRNA hydrolase (179 aa).

Tyr15 contributes to the tRNA binding site. The active-site Proton acceptor is the His20. Residues Tyr66, Asn68, and Asn114 each coordinate tRNA.

Belongs to the PTH family. In terms of assembly, monomer.

The protein resides in the cytoplasm. It carries out the reaction an N-acyl-L-alpha-aminoacyl-tRNA + H2O = an N-acyl-L-amino acid + a tRNA + H(+). Functionally, hydrolyzes ribosome-free peptidyl-tRNAs (with 1 or more amino acids incorporated), which drop off the ribosome during protein synthesis, or as a result of ribosome stalling. In terms of biological role, catalyzes the release of premature peptidyl moieties from peptidyl-tRNA molecules trapped in stalled 50S ribosomal subunits, and thus maintains levels of free tRNAs and 50S ribosomes. The chain is Peptidyl-tRNA hydrolase from Chlamydia trachomatis serovar L2b (strain UCH-1/proctitis).